The following is an 876-amino-acid chain: DNA double-strand break repair Rad50 ATPase (876 aa).

ATP-binding positions include Arg11, 31 to 37, and Gln139; that span reads NGAGKTT. 2 coiled-coil regions span residues 188-528 and 575-710; these read RERV…EDRL and SGVE…RKER. Positions 387-484 constitute a Zinc-hook domain; the sequence is EETLQSEYEE…RLESVRRELE (98 aa). Residues Cys432 and Cys435 each coordinate Zn(2+).

It belongs to the SMC family. RAD50 subfamily. In terms of assembly, homodimer. Forms a heterotetramer composed of two Mre11 subunits and two Rad50 subunits. Zn(2+) is required as a cofactor.

Its function is as follows. Part of the Rad50/Mre11 complex, which is involved in the early steps of DNA double-strand break (DSB) repair. The complex may facilitate opening of the processed DNA ends to aid in the recruitment of HerA and NurA. Rad50 controls the balance between DNA end bridging and DNA resection via ATP-dependent structural rearrangements of the Rad50/Mre11 complex. The sequence is that of DNA double-strand break repair Rad50 ATPase from Methanopyrus kandleri (strain AV19 / DSM 6324 / JCM 9639 / NBRC 100938).